A 288-amino-acid polypeptide reads, in one-letter code: Pantothenate synthetase (288 aa).

Met30 to His37 is a binding site for ATP. The active-site Proton donor is the His37. Gln61 lines the (R)-pantoate pocket. A beta-alanine-binding site is contributed by Gln61. Residue Gly147 to Asp150 participates in ATP binding. Residue Gln153 coordinates (R)-pantoate. ATP-binding positions include Val176 and Ile184–Arg187.

The protein belongs to the pantothenate synthetase family. In terms of assembly, homodimer.

The protein resides in the cytoplasm. It catalyses the reaction (R)-pantoate + beta-alanine + ATP = (R)-pantothenate + AMP + diphosphate + H(+). It participates in cofactor biosynthesis; (R)-pantothenate biosynthesis; (R)-pantothenate from (R)-pantoate and beta-alanine: step 1/1. Functionally, catalyzes the condensation of pantoate with beta-alanine in an ATP-dependent reaction via a pantoyl-adenylate intermediate. This Chlorobium phaeobacteroides (strain BS1) protein is Pantothenate synthetase.